The chain runs to 367 residues: Phospho-N-acetylmuramoyl-pentapeptide-transferase (367 aa).

The next 10 helical transmembrane spans lie at 16-36 (LLLA…WVRF), 62-82 (TMGG…FNLV), 87-107 (MLLP…DDWL), 125-145 (FWIM…PQPY), 158-178 (VGEV…IVFI), 190-210 (SLAG…TFLA), 214-234 (LTNL…FLWY), 240-260 (QVFM…VVAL), 264-284 (QWLL…STMI), and 326-346 (FVLI…IFGP).

It belongs to the glycosyltransferase 4 family. MraY subfamily. Mg(2+) is required as a cofactor.

The protein localises to the cell membrane. The enzyme catalyses UDP-N-acetyl-alpha-D-muramoyl-L-alanyl-gamma-D-glutamyl-meso-2,6-diaminopimeloyl-D-alanyl-D-alanine + di-trans,octa-cis-undecaprenyl phosphate = di-trans,octa-cis-undecaprenyl diphospho-N-acetyl-alpha-D-muramoyl-L-alanyl-D-glutamyl-meso-2,6-diaminopimeloyl-D-alanyl-D-alanine + UMP. Its pathway is cell wall biogenesis; peptidoglycan biosynthesis. Functionally, catalyzes the initial step of the lipid cycle reactions in the biosynthesis of the cell wall peptidoglycan: transfers peptidoglycan precursor phospho-MurNAc-pentapeptide from UDP-MurNAc-pentapeptide onto the lipid carrier undecaprenyl phosphate, yielding undecaprenyl-pyrophosphoryl-MurNAc-pentapeptide, known as lipid I. The chain is Phospho-N-acetylmuramoyl-pentapeptide-transferase from Chloroflexus aurantiacus (strain ATCC 29366 / DSM 635 / J-10-fl).